We begin with the raw amino-acid sequence, 151 residues long: UPF0178 protein YaiI (151 aa).

This sequence belongs to the UPF0178 family.

In Salmonella enteritidis PT4 (strain P125109), this protein is UPF0178 protein YaiI.